The following is a 176-amino-acid chain: Ribosome maturation factor RimM (176 aa).

Positions 93–172 constitute a PRC barrel domain; it reads KDEFFQFDII…EILVKGARDI (80 aa).

This sequence belongs to the RimM family. As to quaternary structure, binds ribosomal protein uS19.

Its subcellular location is the cytoplasm. In terms of biological role, an accessory protein needed during the final step in the assembly of 30S ribosomal subunit, possibly for assembly of the head region. Essential for efficient processing of 16S rRNA. May be needed both before and after RbfA during the maturation of 16S rRNA. It has affinity for free ribosomal 30S subunits but not for 70S ribosomes. This chain is Ribosome maturation factor RimM, found in Campylobacter concisus (strain 13826).